We begin with the raw amino-acid sequence, 700 residues long: UvrABC system protein C (700 aa).

The 80-residue stretch at 11–90 folds into the GIY-YIG domain; it reads TTPGVYLYKD…IKKHRPRYNI (80 aa). The UVR domain occupies 200 to 235; that stretch reads TELIDMLRADMQAASDALEFEEAALLRDQLQAVERT.

The protein belongs to the UvrC family. As to quaternary structure, interacts with UvrB in an incision complex.

The protein resides in the cytoplasm. The UvrABC repair system catalyzes the recognition and processing of DNA lesions. UvrC both incises the 5' and 3' sides of the lesion. The N-terminal half is responsible for the 3' incision and the C-terminal half is responsible for the 5' incision. The protein is UvrABC system protein C of Oleidesulfovibrio alaskensis (strain ATCC BAA-1058 / DSM 17464 / G20) (Desulfovibrio alaskensis).